A 452-amino-acid chain; its full sequence is Packaging protein 1 (452 aa).

The tract at residues 1–78 (MLPCRSTGRR…AKPPQRGSLL (78 aa)) is disordered. An ATP-binding site is contributed by 173–180 (GPTGCGKS). The interval 442–452 (RAYHVRKNKYQ) is DNA-binding.

Belongs to the adenoviridae packaging protein 1 family. As to quaternary structure, homodimer. Part of a genome packaging complex composed of packaging proteins 1, 2 and 3; this complex specifically binds to the packaging sequence on the left end of viral genomic DNA and performs packaging of the viral genome. Interacts with protein 33K.

Its subcellular location is the virion. The protein localises to the host nucleus. It is found in the host nucleoplasm. It localises to the host nucleolus. Its function is as follows. Component of the packaging machinery which encapsidates the viral DNA into preformed capsids and transcriptional activator of the viral major late promoter (MLP). Binds, along with packaging proteins 2 and 3, to the specific packaging sequence on the left end of viral genomic DNA and displays ATPase activity thereby providing the power stroke of the packaging machinery. The activity of packaging protein IVa2 is stimulated by protein 33K which acts as a terminase. May be the protein that pumps DNA into the capsid powered by ATP hydrolysis. Specifically binds to the 5'-CG-3' nucleotides of the repeats making up the packaging sequence. Component of the DEF-A and DEF-B transcription factors that bind downstream elements of the major late promoter (MLP), and stimulate transcription from the MLP after initiation of viral DNA replication. DEF-A is a heterodimer packaging proteins 1 and 2 and DEF-B is a homodimer of packaging protein 1. This is Packaging protein 1 from Homo sapiens (Human).